Here is a 36-residue protein sequence, read N- to C-terminus: uncharacterized protein (36 aa).

It localises to the mitochondrion. This is an uncharacterized protein from Saccharomyces cerevisiae (strain ATCC 204508 / S288c) (Baker's yeast).